Consider the following 240-residue polypeptide: Vesicle-associated membrane protein 727 (240 aa).

The Cytoplasmic portion of the chain corresponds to 1–215 (MSQKGLIYSF…MWLQSLQMKL (215 aa)). The region spanning 6-133 (LIYSFVAKGT…NLDREFGPIL (128 aa)) is the Longin domain. The v-SNARE coiled-coil homology domain occupies 149–209 (KLSKLKAQIT…RQLRRKMWLQ (61 aa)). A helical; Anchor for type IV membrane protein transmembrane segment spans residues 216 to 236 (MVAGAVFSFILIVWVVACGGF). Over 237-240 (KCSS) the chain is Vesicular.

The protein belongs to the synaptobrevin family. In terms of assembly, interacts with subunits of the class C core vacuole/endosome tethering (CORVET) complex including VPS11, VCL1, VPS18, VPS33, VPS3 and VPS8. In terms of tissue distribution, highly expressed in flowers. Detected in leaves, stems and roots.

Its subcellular location is the early endosome membrane. It is found in the endosome membrane. In terms of biological role, involved in the targeting and/or fusion of transport vesicles to their target membrane. The sequence is that of Vesicle-associated membrane protein 727 (VAMP727) from Arabidopsis thaliana (Mouse-ear cress).